Here is a 421-residue protein sequence, read N- to C-terminus: UDP-N-acetylglucosamine 1-carboxyvinyltransferase (421 aa).

22-23 (KN) contributes to the phosphoenolpyruvate binding site. A UDP-N-acetyl-alpha-D-glucosamine-binding site is contributed by Arg-92. The active-site Proton donor is the Cys-116. Cys-116 is modified (2-(S-cysteinyl)pyruvic acid O-phosphothioketal). Residues 121 to 125 (RPVDQ), Asp-304, and Ile-326 contribute to the UDP-N-acetyl-alpha-D-glucosamine site.

This sequence belongs to the EPSP synthase family. MurA subfamily.

The protein localises to the cytoplasm. The catalysed reaction is phosphoenolpyruvate + UDP-N-acetyl-alpha-D-glucosamine = UDP-N-acetyl-3-O-(1-carboxyvinyl)-alpha-D-glucosamine + phosphate. It functions in the pathway cell wall biogenesis; peptidoglycan biosynthesis. In terms of biological role, cell wall formation. Adds enolpyruvyl to UDP-N-acetylglucosamine. The sequence is that of UDP-N-acetylglucosamine 1-carboxyvinyltransferase from Bordetella avium (strain 197N).